The following is a 474-amino-acid chain: MSAYETIIGLEVHVQLNTKTKIFCFCATSFGDEPNKNVCPTCLGLPGALPVLNREAVKKAISFGTAINATINQNSVFARKNYFYPDLPKAYQISQFEIPIVGRGSIEIECNNQTKTIGVTRAHLEEDAGKNIHENNYSKVDLNRACTPLLEIVSEPDMRSSDEAIAYLKKLHSIVRFLGISDANMQEGSFRCDANVSIRPKGDCKLYTRVEIKNLNSFKFIQKAIEYEVERQIEAWEEGKYQSEVVQETRLFDTAKGITRSMRGKEEAADYRYFPDPDLLPVFIDENLMREGVKIPEMPDEKRERYINTLGLKPYDAGVLTSSLELALYFESMLEEGASAKGALTWLTTELLGRLKGENTLQTCGVDSKTLATLVKRIEEGKISGKSGKEILDVLMEKGGDVDSLIDSMGLAQINDDGAIIAVIESVLSANADKVAEYKSGKDKLFGFFVGQVMKNSKGANPARVNELLKEKLG.

The protein belongs to the GatB/GatE family. GatB subfamily. Heterotrimer of A, B and C subunits.

It catalyses the reaction L-glutamyl-tRNA(Gln) + L-glutamine + ATP + H2O = L-glutaminyl-tRNA(Gln) + L-glutamate + ADP + phosphate + H(+). It carries out the reaction L-aspartyl-tRNA(Asn) + L-glutamine + ATP + H2O = L-asparaginyl-tRNA(Asn) + L-glutamate + ADP + phosphate + 2 H(+). Functionally, allows the formation of correctly charged Asn-tRNA(Asn) or Gln-tRNA(Gln) through the transamidation of misacylated Asp-tRNA(Asn) or Glu-tRNA(Gln) in organisms which lack either or both of asparaginyl-tRNA or glutaminyl-tRNA synthetases. The reaction takes place in the presence of glutamine and ATP through an activated phospho-Asp-tRNA(Asn) or phospho-Glu-tRNA(Gln). This is Aspartyl/glutamyl-tRNA(Asn/Gln) amidotransferase subunit B from Helicobacter hepaticus (strain ATCC 51449 / 3B1).